The chain runs to 262 residues: MKPIFLVLLVATSAYAAPSVTINQYSDNEIPRDIDDGKASSVISRAWDYVDDTDKSIAILNVQEILKDMASQGDYASQASAVAQTAGIIAHLSAGIPGDACAAANVINSYTDGVRSGNFAGFRQSLGPFFGHVGQNLNLINQLVINPGQLRYSVGPALGCAGGGRIYDFEAAWDAILASSDSSFLNEEYCIVKRLYNSRNSQSNNIAAYITAHLLPPVAQVFHQSAGSITDLLRGVGNGNDATGLVANAQRYIAQAASQVHV.

The signal sequence occupies residues 1–16 (MKPIFLVLLVATSAYA). Ser19 bears the N-acetylserine; in short form mark. Cys101 and Cys160 are disulfide-bonded.

As to quaternary structure, silk fibroin elementary unit consists in a disulfide-linked heavy and light chain and a p25 glycoprotein in molar ratios of 6:6:1. This results in a complex of approximately 2.3 MDa. In terms of processing, the interchain disulfide bridge is essential for the intracellular transport and secretion of fibroin. Post-translationally, partially N-terminally processed to yield a short form which lacks the first two residues of the long form. Produced exclusively in the posterior (PSG) section of silk glands, which are essentially modified salivary glands.

The protein localises to the secreted. Functionally, it is likely that the major role of L-chain is to prevent the retention of H-chain in ER by forming the disulfide linkage. This chain is Fibroin light chain (FIBL), found in Bombyx mori (Silk moth).